Here is a 386-residue protein sequence, read N- to C-terminus: Trichocyst matrix protein T2-B (386 aa).

The first 19 residues, 1-19 (MKTIILALALIALVSSTQS), serve as a signal peptide directing secretion. The propeptide occupies 20–48 (DVIDTIKKIDQSPFGRTLFDTIWLELQTG). Residues 51 to 154 (LDRLVSTLTD…AEEHEDFEEK (104 aa)) are a coiled coil. Positions 184 to 238 (KGKAAKQPHKFTKDVANLIQKHFTTSAKKTAKFQHRKGYSKLFKAFATIASKVEQ) are excised as a propeptide. The stretch at 294 to 325 (ALANAISDLAALNDIIAQVEASLDTTVQRIEN) forms a coiled coil.

The protein belongs to the TMP family.

The protein resides in the trichocyst. Functionally, structural protein that crystallize inside the trichocyst matrix. In Paramecium tetraurelia, this protein is Trichocyst matrix protein T2-B (T2B).